A 273-amino-acid polypeptide reads, in one-letter code: Phycobilisome 32.1 kDa linker polypeptide, phycocyanin-associated, rod 2 (273 aa).

A PBS-linker domain is found at 1–180 (MTSLVSAQRL…VYRGYATSDR (180 aa)). Positions 220 to 273 (NQMYRLQVIQGAAPGRGTRVRRGKAEYLVSYDNLSAKLQQINRQGDTVTMISLA) constitute a CpcD-like domain.

Belongs to the phycobilisome linker protein family. Part of 2 PBS rod complexes, the conventional CpcG-PBS rod and a photosystem I-specific CpcL-PBS rod, both of which include ferredoxin--NADP reductase (petH). CpcG-PBS has on average 3 stacked phycocyanin hexamers (PC, CpcA and CpcB). Linker CpcG connects the PC stack to the thylakoid, the hexamers are linked by 1 copy of CpcC1, 1 copy of CpcC2 and the stack is terminated by a single copy of CpcD. The CpcL-PBS has on average 5 stacked phycocyanin hexamers (PC, CpcA and CpcB). Linker CpcL connects the PC stack to the thylakoid, the hexamers are linked by 1 copy of CpcC1, 3 copies of CpcC2 and the stack is terminated by a single copy of CpcD. Interacts with the C-phycocyanin (PC) beta subunit (cpcB), it may fit into the center of the PC hexamer.

It is found in the cellular thylakoid membrane. Functionally, rod linker protein, associated with phycocyanin. Linker polypeptides determine the state of aggregation and the location of the disk-shaped phycobiliprotein units within the phycobilisome and modulate their spectroscopic properties in order to mediate a directed and optimal energy transfer. In Synechocystis sp. (strain ATCC 27184 / PCC 6803 / Kazusa), this protein is Phycobilisome 32.1 kDa linker polypeptide, phycocyanin-associated, rod 2 (cpcC2).